We begin with the raw amino-acid sequence, 279 residues long: Eukaryotic translation initiation factor 3 subunit J (279 aa).

2 disordered regions span residues 1–74 and 229–279; these read MSWD…SQKS and ERQA…DDFM. Over residues 20-39 the composition is skewed to acidic residues; that stretch reads WEDEDNDDPLLESWDIDEEE. Positions 34-74 form a coiled coil; that stretch reads DIDEEEVARKKKEEEAKKKAEKEALKQKQQEAKNKKLSQKS. A compositionally biased stretch (basic and acidic residues) spans 40–67; the sequence is VARKKKEEEAKKKAEKEALKQKQQEAKN. Acidic residues predominate over residues 268-279; that stretch reads DDFDDFDDDDFM.

Belongs to the eIF-3 subunit J family. In terms of assembly, component of the eukaryotic translation initiation factor 3 (eIF-3) complex.

Its subcellular location is the cytoplasm. Its function is as follows. Component of the eukaryotic translation initiation factor 3 (eIF-3) complex, which is involved in protein synthesis of a specialized repertoire of mRNAs and, together with other initiation factors, stimulates binding of mRNA and methionyl-tRNAi to the 40S ribosome. The eIF-3 complex specifically targets and initiates translation of a subset of mRNAs involved in cell proliferation. The sequence is that of Eukaryotic translation initiation factor 3 subunit J from Meyerozyma guilliermondii (strain ATCC 6260 / CBS 566 / DSM 6381 / JCM 1539 / NBRC 10279 / NRRL Y-324) (Yeast).